The primary structure comprises 207 residues: Large ribosomal subunit protein uL4 (207 aa).

The tract at residues 43–85 (SRRQGTHDTKGRSEVRGGGRKPWKQKGTGRARQGSIRSPQWVG) is disordered. Basic and acidic residues predominate over residues 47–59 (GTHDTKGRSEVRG). A compositionally biased stretch (basic residues) spans 60 to 71 (GGRKPWKQKGTG).

This sequence belongs to the universal ribosomal protein uL4 family. As to quaternary structure, part of the 50S ribosomal subunit.

In terms of biological role, one of the primary rRNA binding proteins, this protein initially binds near the 5'-end of the 23S rRNA. It is important during the early stages of 50S assembly. It makes multiple contacts with different domains of the 23S rRNA in the assembled 50S subunit and ribosome. Forms part of the polypeptide exit tunnel. This chain is Large ribosomal subunit protein uL4, found in Exiguobacterium sibiricum (strain DSM 17290 / CCUG 55495 / CIP 109462 / JCM 13490 / 255-15).